A 900-amino-acid polypeptide reads, in one-letter code: Alanine--tRNA ligase (900 aa).

The Zn(2+) site is built by His-580, His-584, Cys-683, and His-687.

The protein belongs to the class-II aminoacyl-tRNA synthetase family. Zn(2+) serves as cofactor.

The protein resides in the cytoplasm. The catalysed reaction is tRNA(Ala) + L-alanine + ATP = L-alanyl-tRNA(Ala) + AMP + diphosphate. Its function is as follows. Catalyzes the attachment of alanine to tRNA(Ala) in a two-step reaction: alanine is first activated by ATP to form Ala-AMP and then transferred to the acceptor end of tRNA(Ala). Also edits incorrectly charged Ser-tRNA(Ala) and Gly-tRNA(Ala) via its editing domain. In Mycolicibacterium paratuberculosis (strain ATCC BAA-968 / K-10) (Mycobacterium paratuberculosis), this protein is Alanine--tRNA ligase.